The primary structure comprises 141 residues: MLDGRIMGLDVGDKTIGVAVSDLMGLTAQGVKTIKRVGKKKDIEELKAIIKEKQVNKIVSGLPKNMNGTLGPQGEKVIKFCELVKAETGIDVEFWDERLSTVAAERSLLEADVSRQKRKKVIDMLAAVIILQGYLDFKINS.

The protein belongs to the YqgF nuclease family.

The protein localises to the cytoplasm. In terms of biological role, could be a nuclease involved in processing of the 5'-end of pre-16S rRNA. This chain is Putative pre-16S rRNA nuclease, found in Clostridioides difficile (strain 630) (Peptoclostridium difficile).